Reading from the N-terminus, the 357-residue chain is Nicotinate-nucleotide--dimethylbenzimidazole phosphoribosyltransferase (357 aa).

The Proton acceptor role is filled by Glu317.

Belongs to the CobT family.

It carries out the reaction 5,6-dimethylbenzimidazole + nicotinate beta-D-ribonucleotide = alpha-ribazole 5'-phosphate + nicotinate + H(+). Its pathway is nucleoside biosynthesis; alpha-ribazole biosynthesis; alpha-ribazole from 5,6-dimethylbenzimidazole: step 1/2. Catalyzes the synthesis of alpha-ribazole-5'-phosphate from nicotinate mononucleotide (NAMN) and 5,6-dimethylbenzimidazole (DMB). This chain is Nicotinate-nucleotide--dimethylbenzimidazole phosphoribosyltransferase, found in Halalkalibacterium halodurans (strain ATCC BAA-125 / DSM 18197 / FERM 7344 / JCM 9153 / C-125) (Bacillus halodurans).